Reading from the N-terminus, the 875-residue chain is Serine/threonine-protein kinase D2 (875 aa).

Residues Met-1 to Pro-12 show a composition bias toward low complexity. Residues Met-1 to Leu-35 are disordered. Pro residues predominate over residues Ser-14 to Leu-35. At Ser-30 the chain carries Phosphoserine. Position 87 is a phosphotyrosine (Tyr-87). A Phorbol-ester/DAG-type 1 zinc finger spans residues Pro-138–Cys-188. A phosphoserine mark is found at Ser-197, Ser-198, Ser-200, Ser-203, Ser-206, Ser-211, Ser-212, and Ser-214. A disordered region spans residues Arg-224–Tyr-247. Residues Ser-236–Ser-245 show a composition bias toward low complexity. A Phosphoserine; by CSNK1D and CSNK1E modification is found at Ser-244. At Ser-245 the chain carries Phosphoserine. The Phorbol-ester/DAG-type 2 zinc finger occupies Pro-265–Cys-315. The segment at Asp-332–Gln-374 is disordered. The region spanning Thr-398 to Met-510 is the PH domain. Tyr-408 carries the phosphotyrosine modification. Tyr-439 bears the Phosphotyrosine; by ABL1 mark. Position 519 is a phosphoserine (Ser-519). The 257-residue stretch at Ile-552 to Leu-808 folds into the Protein kinase domain. Residues Leu-558–Val-566 and Lys-581 each bind ATP. Catalysis depends on Asp-675, which acts as the Proton acceptor. Residue Ser-707 is modified to Phosphoserine; by PKC. Position 711 is a phosphoserine; by autocatalysis (Ser-711). Tyr-718 is subject to Phosphotyrosine; by ABL1. The Important for ABL1-mediated Tyr-718 phosphorylation motif lies at Leu-725–Gln-727. At Ser-873 the chain carries Phosphoserine; by autocatalysis.

Belongs to the protein kinase superfamily. CAMK Ser/Thr protein kinase family. PKD subfamily. Interacts (via C-terminus) with LCK. Interacts (via N-terminus and zing-finger domain 1 and 2) with PRKCD in response to oxidative stress; the interaction is independent of PRKD2 tyrosine phosphorylation. It depends on Mg(2+) as a cofactor. In terms of processing, phosphorylation of Ser-873 correlates with the activation status of the kinase. Ser-707 is probably phosphorylated by PKC. Phosphorylation at Ser-244 by CSNK1D and CSNK1E promotes nuclear localization and substrate targeting. Phosphorylation at Ser-244, Ser-707 and Ser-711 is required for nuclear localization. Phosphorylated at Tyr-438 by ABL1 in response to oxidative stress. Phosphorylated at Tyr-718 by ABL1 specifically in response to oxidative stress; requires prior phosphorylation at Ser-707 or/and Ser-711.

It is found in the cytoplasm. Its subcellular location is the cell membrane. It localises to the golgi apparatus. The protein localises to the trans-Golgi network. The catalysed reaction is L-seryl-[protein] + ATP = O-phospho-L-seryl-[protein] + ADP + H(+). It catalyses the reaction L-threonyl-[protein] + ATP = O-phospho-L-threonyl-[protein] + ADP + H(+). Its activity is regulated as follows. Activated by DAG and phorbol esters. Phorbol-ester/DAG-type domains bind DAG, mediating translocation to membranes. Autophosphorylation of Ser-711 and phosphorylation of Ser-707 by PKC relieves auto-inhibition by the PH domain. Catalytic activity is further increased by phosphorylation at Tyr-718 in response to oxidative stress. Its function is as follows. Serine/threonine-protein kinase that converts transient diacylglycerol (DAG) signals into prolonged physiological effects downstream of PKC, and is involved in the regulation of cell proliferation via MAPK1/3 (ERK1/2) signaling, oxidative stress-induced NF-kappa-B activation, inhibition of HDAC7 transcriptional repression, signaling downstream of T-cell antigen receptor (TCR) and cytokine production, and plays a role in Golgi membrane trafficking, angiogenesis, secretory granule release and cell adhesion. May potentiate mitogenesis induced by the neuropeptide bombesin by mediating an increase in the duration of MAPK1/3 (ERK1/2) signaling, which leads to accumulation of immediate-early gene products including FOS that stimulate cell cycle progression. In response to oxidative stress, is phosphorylated at Tyr-438 and Tyr-718 by ABL1, which leads to the activation of PRKD2 without increasing its catalytic activity, and mediates activation of NF-kappa-B. In response to the activation of the gastrin receptor CCKBR, is phosphorylated at Ser-244 by CSNK1D and CSNK1E, translocates to the nucleus, phosphorylates HDAC7, leading to nuclear export of HDAC7 and inhibition of HDAC7 transcriptional repression of NR4A1/NUR77. Upon TCR stimulation, is activated independently of ZAP70, translocates from the cytoplasm to the nucleus and is required for interleukin-2 (IL2) promoter up-regulation. During adaptive immune responses, is required in peripheral T-lymphocytes for the production of the effector cytokines IL2 and IFNG after TCR engagement and for optimal induction of antibody responses to antigens. In epithelial cells stimulated with lysophosphatidic acid (LPA), is activated through a PKC-dependent pathway and mediates LPA-stimulated interleukin-8 (IL8) secretion via a NF-kappa-B-dependent pathway. During TCR-induced T-cell activation, interacts with and is activated by the tyrosine kinase LCK, which results in the activation of the NFAT transcription factors. In the trans-Golgi network (TGN), regulates the fission of transport vesicles that are on their way to the plasma membrane and in polarized cells is involved in the transport of proteins from the TGN to the basolateral membrane. Plays an important role in endothelial cell proliferation and migration prior to angiogenesis, partly through modulation of the expression of KDR/VEGFR2 and FGFR1, two key growth factor receptors involved in angiogenesis. In secretory pathway, is required for the release of chromogranin-A (CHGA)-containing secretory granules from the TGN. Downstream of PRKCA, plays important roles in angiotensin-2-induced monocyte adhesion to endothelial cells. The polypeptide is Serine/threonine-protein kinase D2 (Prkd2) (Mus musculus (Mouse)).